Here is a 243-residue protein sequence, read N- to C-terminus: uncharacterized protein (243 aa).

Residues Cys-120 and Cys-157 each coordinate [4Fe-4S] cluster.

In terms of assembly, homodimer. [4Fe-4S] cluster serves as cofactor.

This is an uncharacterized protein from Methanocaldococcus jannaschii (strain ATCC 43067 / DSM 2661 / JAL-1 / JCM 10045 / NBRC 100440) (Methanococcus jannaschii).